The chain runs to 228 residues: Endonuclease V (228 aa).

Asp-43 and Asp-109 together coordinate Mg(2+).

The protein belongs to the endonuclease V family. Mg(2+) is required as a cofactor.

Its subcellular location is the cytoplasm. It catalyses the reaction Endonucleolytic cleavage at apurinic or apyrimidinic sites to products with a 5'-phosphate.. In terms of biological role, DNA repair enzyme involved in the repair of deaminated bases. Selectively cleaves double-stranded DNA at the second phosphodiester bond 3' to a deoxyinosine leaving behind the intact lesion on the nicked DNA. This Dictyoglomus thermophilum (strain ATCC 35947 / DSM 3960 / H-6-12) protein is Endonuclease V.